A 196-amino-acid chain; its full sequence is Peptide deformylase (196 aa).

Fe cation-binding residues include Cys-103 and His-145. Residue Glu-146 is part of the active site. His-149 provides a ligand contact to Fe cation.

The protein belongs to the polypeptide deformylase family. Requires Fe(2+) as cofactor.

The catalysed reaction is N-terminal N-formyl-L-methionyl-[peptide] + H2O = N-terminal L-methionyl-[peptide] + formate. Its function is as follows. Removes the formyl group from the N-terminal Met of newly synthesized proteins. Requires at least a dipeptide for an efficient rate of reaction. N-terminal L-methionine is a prerequisite for activity but the enzyme has broad specificity at other positions. The polypeptide is Peptide deformylase (Rhodococcus opacus (strain B4)).